Here is a 107-residue protein sequence, read N- to C-terminus: Transcription initiation factor IIA subunit 2-2 (107 aa).

The protein belongs to the TFIIA subunit 2 family. TFIIA is a heterodimer of the large unprocessed subunit 1 and a small subunit gamma. It was originally believed to be a heterotrimer of an alpha (p30), a beta (p20) and a gamma (p14) subunit.

Its subcellular location is the nucleus. Its function is as follows. TFIIA is a component of the transcription machinery of RNA polymerase II and plays an important role in transcriptional activation. TFIIA in a complex with TBP mediates transcriptional activity. This is Transcription initiation factor IIA subunit 2-2 (TfIIA-S-2) from Drosophila melanogaster (Fruit fly).